Here is a 216-residue protein sequence, read N- to C-terminus: FMN-dependent NADH:quinone oxidoreductase (216 aa).

FMN-binding positions include S10 and S15–S17.

This sequence belongs to the azoreductase type 1 family. As to quaternary structure, homodimer. The cofactor is FMN.

It catalyses the reaction 2 a quinone + NADH + H(+) = 2 a 1,4-benzosemiquinone + NAD(+). The enzyme catalyses N,N-dimethyl-1,4-phenylenediamine + anthranilate + 2 NAD(+) = 2-(4-dimethylaminophenyl)diazenylbenzoate + 2 NADH + 2 H(+). Functionally, quinone reductase that provides resistance to thiol-specific stress caused by electrophilic quinones. Its function is as follows. Also exhibits azoreductase activity. Catalyzes the reductive cleavage of the azo bond in aromatic azo compounds to the corresponding amines. The sequence is that of FMN-dependent NADH:quinone oxidoreductase from Nocardia farcinica (strain IFM 10152).